The following is a 151-amino-acid chain: Deoxyuridine 5'-triphosphate nucleotidohydrolase (151 aa).

Residues 70 to 72 (RSG), Asn-83, 87 to 89 (LID), and Met-97 each bind substrate.

It belongs to the dUTPase family. Mg(2+) is required as a cofactor.

The catalysed reaction is dUTP + H2O = dUMP + diphosphate + H(+). Its pathway is pyrimidine metabolism; dUMP biosynthesis; dUMP from dCTP (dUTP route): step 2/2. Its function is as follows. This enzyme is involved in nucleotide metabolism: it produces dUMP, the immediate precursor of thymidine nucleotides and it decreases the intracellular concentration of dUTP so that uracil cannot be incorporated into DNA. This Shigella flexneri serotype 5b (strain 8401) protein is Deoxyuridine 5'-triphosphate nucleotidohydrolase.